The primary structure comprises 406 residues: Phosphopentomutase (406 aa).

The Mn(2+) site is built by Asp-10, Asp-305, His-310, Asp-346, His-347, and His-358.

It belongs to the phosphopentomutase family. Requires Mn(2+) as cofactor.

Its subcellular location is the cytoplasm. The enzyme catalyses 2-deoxy-alpha-D-ribose 1-phosphate = 2-deoxy-D-ribose 5-phosphate. It catalyses the reaction alpha-D-ribose 1-phosphate = D-ribose 5-phosphate. Its pathway is carbohydrate degradation; 2-deoxy-D-ribose 1-phosphate degradation; D-glyceraldehyde 3-phosphate and acetaldehyde from 2-deoxy-alpha-D-ribose 1-phosphate: step 1/2. Functionally, isomerase that catalyzes the conversion of deoxy-ribose 1-phosphate (dRib-1-P) and ribose 1-phosphate (Rib-1-P) to deoxy-ribose 5-phosphate (dRib-5-P) and ribose 5-phosphate (Rib-5-P), respectively. The polypeptide is Phosphopentomutase (Vibrio cholerae serotype O1 (strain ATCC 39541 / Classical Ogawa 395 / O395)).